We begin with the raw amino-acid sequence, 84 residues long: uncharacterized protein (84 aa).

The disordered stretch occupies residues 1-21 (MYYRRQGEPQEMYGNGNNSVS). Residues 49–69 (YIIYAIVAAILLLLFWLLYKK) form a helical membrane-spanning segment.

The protein localises to the membrane. This is an uncharacterized protein from Invertebrate iridescent virus 6 (IIV-6).